The sequence spans 90 residues: DNA-binding protein HU-beta (90 aa).

Belongs to the bacterial histone-like protein family. Heterodimer of an alpha and a beta chain.

Its function is as follows. Histone-like DNA-binding protein which is capable of wrapping DNA to stabilize it, and thus to prevent its denaturation under extreme environmental conditions. The sequence is that of DNA-binding protein HU-beta (hupB) from Pseudomonas fluorescens (strain ATCC BAA-477 / NRRL B-23932 / Pf-5).